A 363-amino-acid chain; its full sequence is Aminomethyltransferase (363 aa).

This sequence belongs to the GcvT family. As to quaternary structure, the glycine cleavage system is composed of four proteins: P, T, L and H.

It carries out the reaction N(6)-[(R)-S(8)-aminomethyldihydrolipoyl]-L-lysyl-[protein] + (6S)-5,6,7,8-tetrahydrofolate = N(6)-[(R)-dihydrolipoyl]-L-lysyl-[protein] + (6R)-5,10-methylene-5,6,7,8-tetrahydrofolate + NH4(+). Functionally, the glycine cleavage system catalyzes the degradation of glycine. This chain is Aminomethyltransferase, found in Prosthecochloris aestuarii (strain DSM 271 / SK 413).